The following is an 860-amino-acid chain: MSAAAAVTSWTNGCWSPAATRVNDGGKDDVWVAVDEADVSGARGSDGGGRPPLFQTYKVKGSILHPYRFLILARLIAIVAFFAWRIRHKNRDGAWLWTMSMVGDVWFGFSWVLNQLPKQSPIKRVPDIAALADRHSGDLPGVDVFVTTVDPVDEPILYTVNTILSILAADYPVDRYACYLSDDGGTLVHYEAMVEVAKFAELWVPFCRKHCVEPRSPENYFAMKTQAYKGGVPGELMSDHRRVRREYEEFKVRIDSLSSTIRQRSDVYNAKHAGENATWMADGTHWPGTWFEPADNHQRGKHAGIVQVLLNHPSCKPRLGLAASAENPVDFSGVDVRLPMLVYISREKRPGYNHQKKAGAMNVMLRVSALLSNAPFVINFDGDHYVNNSQAFRAPMCFMLDGRGRGGENTAFVQFPQRFDDVDPTDRYANHNRVFFDGTMLSLNGLQGPSYLGTGTMFRRVALYGVEPPRWGAAASQIKAMDIANKFGSSTSFVGTMLDGANQERSITPLAVLDESVAGDLAALTACAYEDGTSWGRDVGWVYNIATEDVVTGFRMHRQGWRSVYASVEPAAFRGTAPINLTERLYQILRWSGGSLEMFFSHSNALLAGRRLHPLQRVAYLNMSTYPIVTVFIFFYNLFPVMWLISEQYYIQRPFGEYLLYLVAVIAMIHVIGMFEVKWAGITLLDWCRNEQFYMIGSTGVYPTAVLYMALKLVTGKGIYFRLTSKQTAASSGDKFADLYTVRWVPLLIPTIVIMVVNVAAVGVAVGKAAAWGPLTEPGWLAVLGMVFNVWILVLLYPFALGVMGQWGKRPAVLFVAMAMAVAAVAAMYVAFGAPYQAELSGVAASLGKVAAASLTGPSG.

Helical transmembrane passes span 63 to 83 and 93 to 113; these read ILHP…AFFA and GAWL…SWVL. The active site involves Asp183. Residues 235-263 adopt a coiled-coil conformation; it reads ELMSDHRRVRREYEEFKVRIDSLSSTIRQ. Substrate is bound by residues Asp381 and Asp383. Asp549 is an active-site residue. Transmembrane regions (helical) follow at residues 625 to 645, 655 to 675, 693 to 713, 747 to 767, 781 to 801, and 812 to 832; these read TYPI…MWLI, FGEY…IGMF, FYMI…ALKL, LLIP…VAVG, LAVL…PFAL, and AVLF…YVAF.

This sequence belongs to the glycosyltransferase 2 family. Plant cellulose synthase-like F subfamily.

The protein resides in the golgi apparatus membrane. In terms of biological role, may catalyze both beta-1,3 and beta-1,4 glycosidic linkage on beta-D-glucan. Essential for (1,3;1,4)-beta-D-glucans synthesis in grasses and cereals (Poaceae). The mixed-linked glucans (which are not present in walls of dicotyledons or most other monocotyledonous plants) are particularly important constituents of the walls of the starchy endosperm and aleurone cells of cereal grains such as oats, wheat, rice and barley. They can account for up to 70% by weight of the wall. This Oryza sativa subsp. japonica (Rice) protein is Putative mixed-linked glucan synthase 1 (CSFL1).